A 98-amino-acid polypeptide reads, in one-letter code: Protein E7 (98 aa).

The segment at 1 to 42 (MHGRHVTLKDIVLDLQPPDPVGLHCYEQLVDSSEDEVDEVDG) is E7 terminal domain. Positions 23–27 (LHCYE) match the LXCXE motif; interaction with host RB1 and TMEM173/STING motif. The segment at 58–94 (CCGCDSNVRLVVQCTETDIREVQQLLLGTLNIVCPIC) is a zinc-finger region. The Nuclear export signal signature appears at 76–84 (IREVQQLLL).

The protein belongs to the papillomaviridae E7 protein family. In terms of assembly, homodimer. Homooligomer. Interacts with host RB1; this interaction induces dissociation of RB1-E2F1 complex thereby disrupting RB1 activity. Interacts with host EP300; this interaction represses EP300 transcriptional activity. Interacts with protein E2; this interaction inhibits E7 oncogenic activity. Interacts with host TMEM173/STING; this interaction impairs the ability of TMEM173/STING to sense cytosolic DNA and promote the production of type I interferon (IFN-alpha and IFN-beta). Highly phosphorylated.

It localises to the host cytoplasm. It is found in the host nucleus. In terms of biological role, plays a role in viral genome replication by driving entry of quiescent cells into the cell cycle. Stimulation of progression from G1 to S phase allows the virus to efficiently use the cellular DNA replicating machinery to achieve viral genome replication. E7 protein has both transforming and trans-activating activities. Induces the disassembly of the E2F1 transcription factor from RB1, with subsequent transcriptional activation of E2F1-regulated S-phase genes. Interferes with host histone deacetylation mediated by HDAC1 and HDAC2, leading to transcription activation. Also plays a role in the inhibition of both antiviral and antiproliferative functions of host interferon alpha. Interaction with host TMEM173/STING impairs the ability of TMEM173/STING to sense cytosolic DNA and promote the production of type I interferon (IFN-alpha and IFN-beta). The sequence is that of Protein E7 from Human papillomavirus type 6b.